An 867-amino-acid polypeptide reads, in one-letter code: MNVATCTHQTHHAARAPGATSAPGAASGDPLGARRPIGDDECEQYTSSVSLARMLYGGDLAEWVPRVHPKTTIERQQHGPVTFPDASAPTARCVTVVRAPMGSGKTTALIRWLGEAIHSPDTSVLVVSCRRSFTQTLATRFAESGLPDFVTYFSSTNYIMNDRPFHRLIVQVESLHRVGPNLLNNYDVLVLDEVMSTLGQLYSPTMQQLGRVDALMLRLLRTCPRIIAMDATANAQLVDFLCSLRGEKNVHVVIGEYAMPGFSARRCLFLPRLGPEVLQAALRRRGPAGGAPPPDAPPDATFFGELEARLAGGDNVCIFSSTVSFAEVVARFCRQFTDRVLLLHSLTPPGDVTTWGRYRVVIYTTVVTVGLSFDPPHFDSMFAYVKPMNYGPDMVSVYQSLGRVRTLRKGELLIYMDGSGARSEPVFTPMLLNHVVSASGQWPAQFSQVTNLLCRRFKGRCDASHADAAQARGSRIYSKFRYKHYFERCTLACLADSLNILHMLLTLNCMHVRFWGHDAALTPRNFCLFLRGIHFDALRAQRDLRELRCQDPDTSLSAQAAETEEVGLFVEKYLRPDVAPAEVVALMRGLNSLVGRTRFIYLVLLEACLRVPMAAHSSAIFRRLYDHYATGVIPTINAAGELELVALHPTLNVAPVWELFRLCSTMAACLQWDSMAGGSGRTFSPEDVLELLNPHYDRYMQLVFELGHCNVTDGPLLSEDAVKRVADALSGCPPRGSVSETEHALSLFKIIWGELFGVQLAKSTQTFPGAGRVKNLTKRAIVELLDAHRIDHSACRTHRQLYALLMAHKREFAGARFKLRAPAWGRCLRTHASGAQPNTDIILEAALSELPTEAWPMMQGAVNFSTL.

The interval 1–39 (MNVATCTHQTHHAARAPGATSAPGAASGDPLGARRPIGD) is disordered. Over residues 15-28 (RAPGATSAPGAASG) the composition is skewed to low complexity. Residues 86–251 (ASAPTARCVT…CSLRGEKNVH (166 aa)) form the Helicase ATP-binding domain. 99-106 (APMGSGKT) contacts ATP.

The protein belongs to the herpesviridae OriBP family. In terms of assembly, homodimer. Interacts with the major DNA-binding protein ICP8. Interacts with the helicase/primase component UL8 and the polymerase accessory protein UL42.

Its subcellular location is the host nucleus. Its function is as follows. Functions as a docking protein to recruit essential components of the viral replication machinery to viral DNA origins. In the presence of the major DNA-binding protein, opens dsDNA leading to a conformational change in the origin that facilitates DNA unwinding and subsequent replication. The sequence is that of Replication origin-binding protein from Human herpesvirus 2 (strain HG52) (HHV-2).